The following is a 551-amino-acid chain: Probable 4-coumarate--CoA ligase 2 (551 aa).

ATP-binding residues include S205, S206, G207, T208, T209, and K213. 2 residues coordinate (E)-4-coumaroyl-AMP: Y253 and T257. Residue K274 participates in CoA binding. Positions 276-346 (EFVRFLDLIQ…RFKGKLIIKQ (71 aa)) are SBD1. Residues A323, Q346, G347, and T351 each coordinate (E)-4-coumaroyl-AMP. Residues Q346, G347, T351, D430, and R445 each coordinate ATP. The SBD2 stretch occupies residues 347–409 (GYGATELSPA…IKGPNVMLGY (63 aa)). The (E)-4-coumaroyl-AMP site is built by K447 and K451. CoA is bound by residues K453 and G454. Position 537 (K537) interacts with ATP.

The protein belongs to the ATP-dependent AMP-binding enzyme family. It depends on Mg(2+) as a cofactor.

The enzyme catalyses (E)-4-coumarate + ATP + CoA = (E)-4-coumaroyl-CoA + AMP + diphosphate. It carries out the reaction (E)-4-coumarate + ATP + H(+) = (E)-4-coumaroyl-AMP + diphosphate. It catalyses the reaction (E)-4-coumaroyl-AMP + CoA = (E)-4-coumaroyl-CoA + AMP + H(+). It participates in phytoalexin biosynthesis; 3,4',5-trihydroxystilbene biosynthesis; 3,4',5-trihydroxystilbene from trans-4-coumarate: step 1/2. Carboxylate--CoA ligase that may use 4-coumarate as substrate. Follows a two-step reaction mechanism, wherein the carboxylate substrate first undergoes adenylation by ATP, followed by a thioesterification in the presence of CoA to yield the final CoA thioester. This Dictyostelium discoideum (Social amoeba) protein is Probable 4-coumarate--CoA ligase 2 (4cl2).